Consider the following 88-residue polypeptide: UPF0297 protein LACR_0137 (88 aa).

Belongs to the UPF0297 family.

The protein is UPF0297 protein LACR_0137 of Lactococcus lactis subsp. cremoris (strain SK11).